The chain runs to 116 residues: MKTIIVFLSLLVLATKFGDANEGVNQEQMKEVIQNEFREDFLNEMAPMSLLQQLEAIESTLLEKEADRNSRQKRCNGENVPCGPNHSTCCSGLSCEETFGYGWWYDTPFCVKPSKG.

Residues 1-20 (MKTIIVFLSLLVLATKFGDA) form the signal peptide. Residues 21–74 (NEGVNQEQMKEVIQNEFREDFLNEMAPMSLLQQLEAIESTLLEKEADRNSRQKR) constitute a propeptide that is removed on maturation. Cystine bridges form between Cys75-Cys90, Cys82-Cys95, and Cys89-Cys110. Residue Asn85 is glycosylated (N-linked (GlcNAc...) asparagine).

The protein belongs to the neurotoxin 14 (magi-1) family. 06 (ICK-Trit) subfamily. Expressed by the venom gland.

The protein resides in the secreted. Functionally, ion channel inhibitor. The chain is U16-barytoxin-Tl1f from Trittame loki (Brush-footed trapdoor spider).